A 553-amino-acid polypeptide reads, in one-letter code: Probable inactive serine/threonine-protein kinase samkD (553 aa).

Positions 24–90 (WDNETVCKWL…FEYQILKNCY (67 aa)) constitute an SAM domain. In terms of domain architecture, Protein kinase spans 134–393 (YQYIETISKN…SKELLKSFWF (260 aa)). ATP-binding positions include 140–148 (ISKNKFCEI) and Lys-165.

Belongs to the protein kinase superfamily. Ser/Thr protein kinase family.

This Dictyostelium discoideum (Social amoeba) protein is Probable inactive serine/threonine-protein kinase samkD (samkD).